An 889-amino-acid polypeptide reads, in one-letter code: DNA mismatch repair protein MutS (889 aa).

Low complexity predominate over residues 1–17; it reads MPKTNSSAASTNANPSS. Residues 1-20 are disordered; the sequence is MPKTNSSAASTNANPSSLQQ. 640–647 contributes to the ATP binding site; the sequence is GPNMGGKS.

Belongs to the DNA mismatch repair MutS family.

Functionally, this protein is involved in the repair of mismatches in DNA. It is possible that it carries out the mismatch recognition step. This protein has a weak ATPase activity. The protein is DNA mismatch repair protein MutS of Pseudoalteromonas atlantica (strain T6c / ATCC BAA-1087).